The following is a 138-amino-acid chain: MNIIDNFEQENIAKLTANKKIPDFEAGDTVKVTVKIIDKAIEKDGKEKLTERFQAYEGVVIAKRNRGITSSFLVRKISHGEGVERRFMTYSPIVHSIDVVKYGVVRRAKLYYLRHRNGKAARIREKLISRAKPKTAIS.

The protein belongs to the bacterial ribosomal protein bL19 family.

Its function is as follows. This protein is located at the 30S-50S ribosomal subunit interface and may play a role in the structure and function of the aminoacyl-tRNA binding site. The protein is Large ribosomal subunit protein bL19 (rplS) of Rickettsia prowazekii (strain Madrid E).